A 168-amino-acid polypeptide reads, in one-letter code: Cyclic pyranopterin monophosphate synthase (168 aa).

Substrate is bound by residues 83–85 and 121–122; these read LCH and ME. Residue Asp-136 is part of the active site.

The protein belongs to the MoaC family. Homohexamer; trimer of dimers.

The enzyme catalyses (8S)-3',8-cyclo-7,8-dihydroguanosine 5'-triphosphate = cyclic pyranopterin phosphate + diphosphate. It participates in cofactor biosynthesis; molybdopterin biosynthesis. Its function is as follows. Catalyzes the conversion of (8S)-3',8-cyclo-7,8-dihydroguanosine 5'-triphosphate to cyclic pyranopterin monophosphate (cPMP). This Nostoc sp. (strain PCC 7120 / SAG 25.82 / UTEX 2576) protein is Cyclic pyranopterin monophosphate synthase.